A 529-amino-acid chain; its full sequence is UDP-glucuronosyltransferase 2B9 (529 aa).

The signal sequence occupies residues 1–21 (MSVKWTSVILLIQLSFYFSSG). N-linked (GlcNAc...) asparagine glycosylation is found at Asn-67, Asn-68, and Asn-88. Residues 494-514 (IGFLLACVATVIFVIMKCCLF) traverse the membrane as a helical segment.

Belongs to the UDP-glycosyltransferase family.

The protein resides in the microsome membrane. It is found in the endoplasmic reticulum membrane. It carries out the reaction glucuronate acceptor + UDP-alpha-D-glucuronate = acceptor beta-D-glucuronoside + UDP + H(+). UDPGT is of major importance in the conjugation and subsequent elimination of potentially toxic xenobiotics and endogenous compounds. This isozyme is active on C18, C19, and C21 steroids, bile acids, and several xenobiotics including eugenol, 1-naphthol, and p-nitrophenol. The chain is UDP-glucuronosyltransferase 2B9 (UGT2B9) from Macaca fascicularis (Crab-eating macaque).